A 461-amino-acid polypeptide reads, in one-letter code: MQKLFRTIPAIDKLMKKPQGIDLIERFGHQAFVQEARILIENAREQIIKQQCLPAFMNEQSSIFSLIEQNLQKKRMVSSKTVFNLTGTVLHTNLGRGLWSENAITAATNAMRNNVALEFDIDEGKRSHRDIYISQLIQQLTGAEAACIVNNNAAAVLLMLATFAQGKEVIVSRGELVEIGGAFRIPDIMAQAGCKLVEVGTTNRTHLRDYRNAINENTAFLMKVHTSNYHIQGFTKSVSEEELVELAKEFDLPVISDLGSGSLTDMAVLGLPAEPMVQQKVAAGVDLVSFSCDKLLGGPQAGIIVGKKALIDGLQSHPLKRVLRCDKVILSALEATLRHYLFPEKLTDEVPTFQLLTQSIETLQNKAERLKAVLNKRLDSRYILQVEPSLAQIGSGSLPTETLASVAVTVFAEKQSDLLELEKRFKALPSPIIGRFAQQKFWLDVRSAAQFEQLLNMLEEA.

Lys294 bears the N6-(pyridoxal phosphate)lysine mark.

The protein belongs to the SelA family. It depends on pyridoxal 5'-phosphate as a cofactor.

It is found in the cytoplasm. It catalyses the reaction L-seryl-tRNA(Sec) + selenophosphate + H(+) = L-selenocysteinyl-tRNA(Sec) + phosphate. It functions in the pathway aminoacyl-tRNA biosynthesis; selenocysteinyl-tRNA(Sec) biosynthesis; selenocysteinyl-tRNA(Sec) from L-seryl-tRNA(Sec) (bacterial route): step 1/1. Converts seryl-tRNA(Sec) to selenocysteinyl-tRNA(Sec) required for selenoprotein biosynthesis. This chain is L-seryl-tRNA(Sec) selenium transferase, found in Actinobacillus pleuropneumoniae serotype 5b (strain L20).